A 116-amino-acid chain; its full sequence is Ribonuclease P protein component (116 aa).

This sequence belongs to the RnpA family. Consists of a catalytic RNA component (M1 or rnpB) and a protein subunit.

It carries out the reaction Endonucleolytic cleavage of RNA, removing 5'-extranucleotides from tRNA precursor.. In terms of biological role, RNaseP catalyzes the removal of the 5'-leader sequence from pre-tRNA to produce the mature 5'-terminus. It can also cleave other RNA substrates such as 4.5S RNA. The protein component plays an auxiliary but essential role in vivo by binding to the 5'-leader sequence and broadening the substrate specificity of the ribozyme. This is Ribonuclease P protein component from Mycobacterium bovis (strain ATCC BAA-935 / AF2122/97).